The primary structure comprises 265 residues: Isoprenyl transferase 1 (265 aa).

Asp-43 is an active-site residue. Mg(2+) is bound at residue Asp-43. Substrate is bound by residues 44–47 (GNRR), Trp-48, His-61, and 89–91 (STE). Asn-92 serves as the catalytic Proton acceptor. Residues Arg-95, Arg-214, and 220-222 (RLS) contribute to the substrate site. Residue Glu-233 participates in Mg(2+) binding.

This sequence belongs to the UPP synthase family. As to quaternary structure, homodimer. The cofactor is Mg(2+).

Functionally, catalyzes the condensation of isopentenyl diphosphate (IPP) with allylic pyrophosphates generating different type of terpenoids. The protein is Isoprenyl transferase 1 of Corynebacterium diphtheriae (strain ATCC 700971 / NCTC 13129 / Biotype gravis).